Here is a 222-residue protein sequence, read N- to C-terminus: MNMSRVEQQVIRYPAAKATPVGYLPDPASFNKFRVPASSKKSEQSNVKSILKRKKTDGFTNGVRDQSKIRPKLTETVKRKLSLGARILQVGGLEKIFKRLFRVSEGEKLFKMYQCYLSTTAGPIAGLLFISSKKMAFCSERSIKVDSPQGDIIRVHYKVSIPLCKIDRVNQSQNTKKPSQKYLEVVTVDGFDFWFMGFLSYQKAFNCLEKALSLSFEDNKEQ.

A GRAM domain is found at 95-173 (KIFKRLFRVS…CKIDRVNQSQ (79 aa)).

Belongs to the GEM family.

The sequence is that of GEM-like protein 4 from Arabidopsis thaliana (Mouse-ear cress).